A 269-amino-acid chain; its full sequence is SF-assemblin (269 aa).

The segment at 1 to 23 (MSISPGRSFSPMRASGLTGITSA) is disordered. Residues 1–24 (MSISPGRSFSPMRASGLTGITSAG) are nonhelical region. The segment at 25 to 269 (PTAKLEHVSE…LQEGLKLVST (245 aa)) is rod. Residues 98–144 (AERSAAQHVDMQNSLKQAVDSLSNRLQDLHSLVREEREQRRNDIEHL) adopt a coiled-coil conformation.

This sequence belongs to the SF-assemblin family.

It is found in the cytoplasm. It localises to the cytoskeleton. Functionally, major component of the striated microtubule-associated fibers (SMAFs; system-I-fibers). The polypeptide is SF-assemblin (Chlamydomonas moewusii (Chlamydomonas eugametos)).